The sequence spans 503 residues: Putative (R)-citramalate synthase CimA (503 aa).

The Pyruvate carboxyltransferase domain maps to I9–Y257.

Belongs to the alpha-IPM synthase/homocitrate synthase family. In terms of assembly, homodimer.

The catalysed reaction is pyruvate + acetyl-CoA + H2O = (3R)-citramalate + CoA + H(+). It functions in the pathway amino-acid biosynthesis; L-isoleucine biosynthesis; 2-oxobutanoate from pyruvate: step 1/3. Functionally, catalyzes the condensation of pyruvate and acetyl-coenzyme A to form (R)-citramalate. This is Putative (R)-citramalate synthase CimA from Methanoculleus marisnigri (strain ATCC 35101 / DSM 1498 / JR1).